The chain runs to 385 residues: Endoglucanase 1 (385 aa).

An N-terminal signal peptide occupies residues 1-17 (MKLVFSALASLLSGASA). N-linked (GlcNAc...) asparagine glycosylation is found at asparagine 93 and asparagine 140. The active-site Proton donor is glutamate 176. Asparagine 200 and asparagine 237 each carry an N-linked (GlcNAc...) asparagine glycan. The active-site Nucleophile is glutamate 284. N-linked (GlcNAc...) asparagine glycans are attached at residues asparagine 289 and asparagine 331.

The protein belongs to the glycosyl hydrolase 5 (cellulase A) family.

It carries out the reaction Endohydrolysis of (1-&gt;4)-beta-D-glucosidic linkages in cellulose, lichenin and cereal beta-D-glucans.. The protein operates within glycan metabolism; cellulose degradation. Its function is as follows. Active towards carboxymethyl cellulose. This is Endoglucanase 1 (eg 1) from Robillarda sp. (strain Y-20).